The primary structure comprises 415 residues: Gamma-glutamyl phosphate reductase (415 aa).

The protein belongs to the gamma-glutamyl phosphate reductase family.

The protein resides in the cytoplasm. It carries out the reaction L-glutamate 5-semialdehyde + phosphate + NADP(+) = L-glutamyl 5-phosphate + NADPH + H(+). The protein operates within amino-acid biosynthesis; L-proline biosynthesis; L-glutamate 5-semialdehyde from L-glutamate: step 2/2. In terms of biological role, catalyzes the NADPH-dependent reduction of L-glutamate 5-phosphate into L-glutamate 5-semialdehyde and phosphate. The product spontaneously undergoes cyclization to form 1-pyrroline-5-carboxylate. The sequence is that of Gamma-glutamyl phosphate reductase from Clostridium perfringens (strain 13 / Type A).